We begin with the raw amino-acid sequence, 389 residues long: Putative teichuronic acid biosynthesis glycosyltransferase TuaC (389 aa).

It belongs to the glycosyltransferase group 1 family. Glycosyltransferase 4 subfamily.

The protein operates within cell wall biogenesis; teichuronic acid biosynthesis. The sequence is that of Putative teichuronic acid biosynthesis glycosyltransferase TuaC (tuaC) from Bacillus subtilis (strain 168).